Reading from the N-terminus, the 237-residue chain is UPF0688 protein C1orf174 homolog (237 aa).

The disordered stretch occupies residues 1-187 (MRSRKLAGGV…LLDDDSNQPM (187 aa)). Residues 11–28 (RSSARLRARSCSAASASA) are compositionally biased toward low complexity. The segment covering 29–47 (QDTHVTTSAQTACQTPSSH) has biased composition (polar residues). Residues 48-76 (KATDRRTSKKFKYDKGHIVKSELQKHRSD) are compositionally biased toward basic and acidic residues. Ser183 is modified (phosphoserine).

Belongs to the UPF0688 family.

The protein resides in the nucleus. This Bos taurus (Bovine) protein is UPF0688 protein C1orf174 homolog.